The following is a 233-amino-acid chain: Uracil-DNA glycosylase (233 aa).

The active-site Proton acceptor is aspartate 70.

Belongs to the uracil-DNA glycosylase (UDG) superfamily. UNG family.

The protein resides in the cytoplasm. It carries out the reaction Hydrolyzes single-stranded DNA or mismatched double-stranded DNA and polynucleotides, releasing free uracil.. Its function is as follows. Excises uracil residues from the DNA which can arise as a result of misincorporation of dUMP residues by DNA polymerase or due to deamination of cytosine. This Helicobacter pylori (strain Shi470) protein is Uracil-DNA glycosylase.